Reading from the N-terminus, the 170-residue chain is Small ribosomal subunit protein uS4 (170 aa).

In terms of domain architecture, S4 RNA-binding spans 100–164 (RRLQTVVYRE…SDLTDELHPA (65 aa)).

It belongs to the universal ribosomal protein uS4 family. As to quaternary structure, part of the 30S ribosomal subunit. Contacts protein S5. The interaction surface between S4 and S5 is involved in control of translational fidelity.

Functionally, one of the primary rRNA binding proteins, it binds directly to 16S rRNA where it nucleates assembly of the body of the 30S subunit. With S5 and S12 plays an important role in translational accuracy. This is Small ribosomal subunit protein uS4 from Halobacterium salinarum (strain ATCC 29341 / DSM 671 / R1).